The sequence spans 400 residues: Lysophospholipid transporter LplT (400 aa).

12 consecutive transmembrane segments (helical) span residues 19–39, 53–73, 91–111, 139–159, 164–184, 195–213, 227–247, 257–277, 281–301, 304–324, 352–372, and 373–393; these read VIVA…ATLA, VLQM…GQIA, AGAA…LVGI, MMEA…GVLA, IAAL…NLFI, SWRL…VVLW, LFWG…PVAL, YLNA…AKLV, TVSR…IFSL, ALLP…FFVV, NSAM…GVPA, and VAIG…LWIW.

This sequence belongs to the major facilitator superfamily. LplT (TC 2.A.1.42) family.

Its subcellular location is the cell inner membrane. Catalyzes the facilitated diffusion of 2-acyl-glycero-3-phosphoethanolamine (2-acyl-GPE) into the cell. The polypeptide is Lysophospholipid transporter LplT (Salmonella paratyphi B (strain ATCC BAA-1250 / SPB7)).